Consider the following 316-residue polypeptide: tRNA dimethylallyltransferase (316 aa).

23–30 (GPTASGKS) is a binding site for ATP. Position 25-30 (25-30 (TASGKS)) interacts with substrate. An interaction with substrate tRNA region spans residues 48–51 (DSMQ).

It belongs to the IPP transferase family. As to quaternary structure, monomer. Mg(2+) is required as a cofactor.

The catalysed reaction is adenosine(37) in tRNA + dimethylallyl diphosphate = N(6)-dimethylallyladenosine(37) in tRNA + diphosphate. Catalyzes the transfer of a dimethylallyl group onto the adenine at position 37 in tRNAs that read codons beginning with uridine, leading to the formation of N6-(dimethylallyl)adenosine (i(6)A). This Rhodopseudomonas palustris (strain BisB18) protein is tRNA dimethylallyltransferase.